The sequence spans 76 residues: Liver-expressed antimicrobial peptide 2 (76 aa).

An N-terminal signal peptide occupies residues 1–22 (MLQLKLFAVLLTCLLLLGQVNS). The propeptide occupies 23-36 (SPVPEVSSAKRSRR). 2 disulfide bridges follow: C53/C64 and C59/C69.

Belongs to the LEAP2 family.

It is found in the secreted. Its function is as follows. Has an antimicrobial activity. The sequence is that of Liver-expressed antimicrobial peptide 2 (Leap2) from Mus musculus (Mouse).